The chain runs to 150 residues: Cytochrome c oxidase subunit 5A, mitochondrial (150 aa).

The N-terminal 41 residues, 1 to 41 (MLGAALRRCAVAATTRADPRGLLHSARTPGPAVAIQSVRCY), are a transit peptide targeting the mitochondrion. An SIFI-degron motif is present at residues 2–17 (LGAALRRCAVAATTRA). An N6-acetyllysine mark is found at Lys-87 and Lys-113. A Phosphothreonine modification is found at Thr-141.

This sequence belongs to the cytochrome c oxidase subunit 5A family. As to quaternary structure, component of the cytochrome c oxidase (complex IV, CIV), a multisubunit enzyme composed of 14 subunits. The complex is composed of a catalytic core of 3 subunits MT-CO1, MT-CO2 and MT-CO3, encoded in the mitochondrial DNA, and 11 supernumerary subunits COX4I1 (or COX4I2), COX5A, COX5B, COX6A1 (or COX6A2), COX6B1 (or COX6B2), COX6C, COX7A2 (or COX7A1), COX7B, COX7C, COX8A and NDUFA4, which are encoded in the nuclear genome. The complex exists as a monomer or a dimer and forms supercomplexes (SCs) in the inner mitochondrial membrane with NADH-ubiquinone oxidoreductase (complex I, CI) and ubiquinol-cytochrome c oxidoreductase (cytochrome b-c1 complex, complex III, CIII), resulting in different assemblies (supercomplex SCI(1)III(2)IV(1) and megacomplex MCI(2)III(2)IV(2)). Interacts with AFG1L. Interacts with RAB5IF. In terms of processing, in response to mitochondrial stress, the precursor protein is ubiquitinated by the SIFI complex in the cytoplasm before mitochondrial import, leading to its degradation. Within the SIFI complex, UBR4 initiates ubiquitin chain that are further elongated or branched by KCMF1.

The protein localises to the mitochondrion inner membrane. Its pathway is energy metabolism; oxidative phosphorylation. Its function is as follows. Component of the cytochrome c oxidase, the last enzyme in the mitochondrial electron transport chain which drives oxidative phosphorylation. The respiratory chain contains 3 multisubunit complexes succinate dehydrogenase (complex II, CII), ubiquinol-cytochrome c oxidoreductase (cytochrome b-c1 complex, complex III, CIII) and cytochrome c oxidase (complex IV, CIV), that cooperate to transfer electrons derived from NADH and succinate to molecular oxygen, creating an electrochemical gradient over the inner membrane that drives transmembrane transport and the ATP synthase. Cytochrome c oxidase is the component of the respiratory chain that catalyzes the reduction of oxygen to water. Electrons originating from reduced cytochrome c in the intermembrane space (IMS) are transferred via the dinuclear copper A center (CU(A)) of subunit 2 and heme A of subunit 1 to the active site in subunit 1, a binuclear center (BNC) formed by heme A3 and copper B (CU(B)). The BNC reduces molecular oxygen to 2 water molecules using 4 electrons from cytochrome c in the IMS and 4 protons from the mitochondrial matrix. This is Cytochrome c oxidase subunit 5A, mitochondrial (COX5A) from Homo sapiens (Human).